Consider the following 152-residue polypeptide: Large ribosomal subunit protein bL9 (152 aa).

This sequence belongs to the bacterial ribosomal protein bL9 family.

Binds to the 23S rRNA. The sequence is that of Large ribosomal subunit protein bL9 from Saccharophagus degradans (strain 2-40 / ATCC 43961 / DSM 17024).